The chain runs to 334 residues: Acryloyl-coenzyme A reductase (334 aa).

Residue C38 participates in Zn(2+) binding. Y39 contributes to the NADP(+) binding site. 6 residues coordinate Zn(2+): H60, D90, C93, C96, C104, and C146. Residues 173-176 (SGGV) and 195-197 (TTS) contribute to the NADP(+) site.

It belongs to the zinc-containing alcohol dehydrogenase family. As to quaternary structure, monomer. Zn(2+) serves as cofactor.

The catalysed reaction is propanoyl-CoA + NADP(+) = acryloyl-CoA + NADPH + H(+). Plays a role in autotrophic carbon fixation via the 3-hydroxypropionate/4-hydroxybutyrate cycle. Catalyzes the acryloyl-CoA dependent NADPH oxidation and formation of propionyl-CoA. Inactive towards 3-hydroxypropionyl-CoA, NADH and crotonyl-CoA. This is Acryloyl-coenzyme A reductase from Sulfurisphaera tokodaii (strain DSM 16993 / JCM 10545 / NBRC 100140 / 7) (Sulfolobus tokodaii).